Here is a 356-residue protein sequence, read N- to C-terminus: Tyrosine recombinase XerS (356 aa).

In terms of domain architecture, Core-binding (CB) spans Val16–Thr121. Residues Ala169 to Asp354 form the Tyr recombinase domain. Active-site residues include Arg210, Lys234, His306, Arg309, and His332. The O-(3'-phospho-DNA)-tyrosine intermediate role is filled by Tyr341.

This sequence belongs to the 'phage' integrase family. XerS subfamily.

The protein resides in the cytoplasm. FtsK is required for recombination. Site-specific tyrosine recombinase, which acts by catalyzing the cutting and rejoining of the recombining DNA molecules. Essential to convert dimers of the bacterial chromosome into monomers to permit their segregation at cell division. This chain is Tyrosine recombinase XerS, found in Streptococcus pyogenes serotype M28 (strain MGAS6180).